Reading from the N-terminus, the 481-residue chain is Delta(14)-sterol reductase ERG24B (481 aa).

8 consecutive transmembrane segments (helical) span residues 11–31 (FGGP…MQVL), 80–100 (LFAY…QIVL), 125–145 (LTGC…WTWI), 149–169 (YIQL…WTYL), 244–264 (TYGF…YYVL), 279–299 (ITSD…VPFL), 313–333 (HLGP…LYIF), and 427–447 (AAPW…FLLI).

It belongs to the ERG4/ERG24 family.

It is found in the endoplasmic reticulum membrane. The enzyme catalyses 4,4-dimethyl-5alpha-cholesta-8,24-dien-3beta-ol + NADP(+) = 4,4-dimethyl-5alpha-cholesta-8,14,24-trien-3beta-ol + NADPH + H(+). It functions in the pathway steroid metabolism; ergosterol biosynthesis. Delta(14)-sterol reductase; part of the third module of ergosterol biosynthesis pathway that includes the late steps of the pathway. Catalyzes the reduction of the C14=C15 double bond within 4,4,24-trimethyl ergosta-8,14,24(28)-trienolto produce 4,4-dimethylfecosterol. The third module or late pathway involves the ergosterol synthesis itself through consecutive reactions that mainly occur in the endoplasmic reticulum (ER) membrane. Firstly, the squalene synthase ERG9 catalyzes the condensation of 2 farnesyl pyrophosphate moieties to form squalene, which is the precursor of all steroids. Squalene synthase is crucial for balancing the incorporation of farnesyl diphosphate (FPP) into sterol and nonsterol isoprene synthesis. Secondly, squalene is converted into lanosterol by the consecutive action of the squalene epoxidase ERG1 and the lanosterol synthase ERG7. Then, the delta(24)-sterol C-methyltransferase ERG6 methylates lanosterol at C-24 to produce eburicol. Eburicol is the substrate of the sterol 14-alpha demethylase encoded by CYP51A, CYP51B and CYP51C, to yield 4,4,24-trimethyl ergosta-8,14,24(28)-trienol. CYP51B encodes the enzyme primarily responsible for sterol 14-alpha-demethylation, and plays an essential role in ascospore formation. CYP51A encodes an additional sterol 14-alpha-demethylase, induced on ergosterol depletion and responsible for the intrinsic variation in azole sensitivity. The third CYP51 isoform, CYP51C, does not encode a sterol 14-alpha-demethylase, but is required for full virulence on host wheat ears. The C-14 reductase ERG24 then reduces the C14=C15 double bond which leads to 4,4-dimethylfecosterol. A sequence of further demethylations at C-4, involving the C-4 demethylation complex containing the C-4 methylsterol oxidases ERG25, the sterol-4-alpha-carboxylate 3-dehydrogenase ERG26 and the 3-keto-steroid reductase ERG27, leads to the production of fecosterol via 4-methylfecosterol. ERG28 has a role as a scaffold to help anchor ERG25, ERG26 and ERG27 to the endoplasmic reticulum. The C-8 sterol isomerase ERG2 then catalyzes the reaction which results in unsaturation at C-7 in the B ring of sterols and thus converts fecosterol to episterol. The sterol-C5-desaturases ERG3A and ERG3BB then catalyze the introduction of a C-5 double bond in the B ring to produce 5-dehydroepisterol. The C-22 sterol desaturases ERG5A and ERG5B further convert 5-dehydroepisterol into ergosta-5,7,22,24(28)-tetraen-3beta-ol by forming the C-22(23) double bond in the sterol side chain. Finally, ergosta-5,7,22,24(28)-tetraen-3beta-ol is substrate of the C-24(28) sterol reductase ERG4 to produce ergosterol. This is Delta(14)-sterol reductase ERG24B from Gibberella zeae (strain ATCC MYA-4620 / CBS 123657 / FGSC 9075 / NRRL 31084 / PH-1) (Wheat head blight fungus).